Reading from the N-terminus, the 278-residue chain is Manganese import system permease protein ScaB (278 aa).

Helical transmembrane passes span 18–38 (ALITAIAIGIVAGAVGCFIIL), 40–60 (GMSLMGDAISHAVLPGVALSF), 61–81 (ILGINFFIGAIAFGLLASILI), 136–156 (VTIGVGVAVLLVIVLLFRPLL), 172–192 (VKLYHYLLMVLLTLVSVTAMQ), 194–214 (VGTILIAAMLITPAATAYLYA), 220–240 (MMLLSSGLGALASILGLFIGY), and 244–264 (IAVGSCIVLTSAIFFLISFFI).

It belongs to the ABC-3 integral membrane protein family.

Its subcellular location is the cell membrane. Its function is as follows. Part of an ABC transporter complex involved in manganese import. In Streptococcus pneumoniae, this protein is Manganese import system permease protein ScaB.